Here is a 304-residue protein sequence, read N- to C-terminus: Meiotically up-regulated gene 86 protein (304 aa).

The segment covering 1–12 has biased composition (low complexity); it reads MSSNPSRSNSRS. The tract at residues 1 to 23 is disordered; that stretch reads MSSNPSRSNSRSKNGDLESGLKF. The next 6 membrane-spanning stretches (helical) occupy residues 93–113, 123–143, 150–170, 188–208, 212–232, and 247–267; these read PAPFGLSAFAFTTFLLSLFNV, MVTAPAAFYGGLAQLLASMWE, FGGAVFGSYGCFWLSYASIFI, AIGLYLICWFIFTFLVLLCTV, LAFFSLFMSLDVCFLLLACAF, and VGGAFGIFSACAAWYNAMAGL.

Belongs to the acetate uptake transporter (AceTr) (TC 2.A.96) family.

It localises to the endoplasmic reticulum membrane. Its subcellular location is the golgi apparatus. The protein resides in the golgi stack membrane. It is found in the vacuole membrane. Has a role in meiosis. This Schizosaccharomyces pombe (strain 972 / ATCC 24843) (Fission yeast) protein is Meiotically up-regulated gene 86 protein (mug86).